A 572-amino-acid chain; its full sequence is Phosphoenolpyruvate-protein phosphotransferase (572 aa).

His190 functions as the Tele-phosphohistidine intermediate in the catalytic mechanism. Residues Arg297 and Arg333 each contribute to the phosphoenolpyruvate site. Mg(2+) contacts are provided by Glu427 and Asp451. Phosphoenolpyruvate contacts are provided by residues 450-451 (ND) and Arg461. Cys498 serves as the catalytic Proton donor.

This sequence belongs to the PEP-utilizing enzyme family. Homodimer. It depends on Mg(2+) as a cofactor.

The protein localises to the cytoplasm. The catalysed reaction is L-histidyl-[protein] + phosphoenolpyruvate = N(pros)-phospho-L-histidyl-[protein] + pyruvate. Functionally, general (non sugar-specific) component of the phosphoenolpyruvate-dependent sugar phosphotransferase system (sugar PTS). This major carbohydrate active-transport system catalyzes the phosphorylation of incoming sugar substrates concomitantly with their translocation across the cell membrane. Enzyme I transfers the phosphoryl group from phosphoenolpyruvate (PEP) to the phosphoryl carrier protein (HPr). This chain is Phosphoenolpyruvate-protein phosphotransferase (ptsI), found in Mycoplasma genitalium (strain ATCC 33530 / DSM 19775 / NCTC 10195 / G37) (Mycoplasmoides genitalium).